The following is a 304-amino-acid chain: Pyridoxal 5'-phosphate synthase subunit pyroA (304 aa).

Asp-28 serves as a coordination point for D-ribose 5-phosphate. The active-site Schiff-base intermediate with D-ribose 5-phosphate is Lys-85. Gly-157 contributes to the D-ribose 5-phosphate binding site. Arg-169 serves as a coordination point for D-glyceraldehyde 3-phosphate. Residues Gly-224 and 245–246 each bind D-ribose 5-phosphate; that span reads GS.

It belongs to the PdxS/SNZ family.

It carries out the reaction aldehydo-D-ribose 5-phosphate + D-glyceraldehyde 3-phosphate + L-glutamine = pyridoxal 5'-phosphate + L-glutamate + phosphate + 3 H2O + H(+). It participates in cofactor biosynthesis; pyridoxal 5'-phosphate biosynthesis. Functionally, catalyzes the formation of pyridoxal 5'-phosphate from ribose 5-phosphate (RBP), glyceraldehyde 3-phosphate (G3P) and ammonia. The ammonia is provided by PDX2. Can also use ribulose 5-phosphate and dihydroxyacetone phosphate as substrates, resulting from enzyme-catalyzed isomerization of RBP and G3P, respectively. Also plays an indirect role in resistance to singlet oxygen-generating photosensitizers. The chain is Pyridoxal 5'-phosphate synthase subunit pyroA (pyroA) from Emericella nidulans (strain FGSC A4 / ATCC 38163 / CBS 112.46 / NRRL 194 / M139) (Aspergillus nidulans).